The sequence spans 217 residues: MKFFVDTADVNEIRELSETGLLDGVTTNPSLIMKSGRPILEVTREICEIVDGPVSAEVTAVDFKEMMREADILSKIADNIAIKVPLTMDGLKACKALTSSGRMVNVTLCFSANQALLAAKAGATFISPFIGRIDDMGIDGMELIAEIRTIYDNYDFDTEILAASIRSVNHVKQAAIIGADVATVPPAVLKSLVKHPLTDKGLEAFLADWAKTGQKIG.

Lys-83 (schiff-base intermediate with substrate) is an active-site residue.

The protein belongs to the transaldolase family. Type 3B subfamily.

It is found in the cytoplasm. The enzyme catalyses D-sedoheptulose 7-phosphate + D-glyceraldehyde 3-phosphate = D-erythrose 4-phosphate + beta-D-fructose 6-phosphate. It participates in carbohydrate degradation; pentose phosphate pathway; D-glyceraldehyde 3-phosphate and beta-D-fructose 6-phosphate from D-ribose 5-phosphate and D-xylulose 5-phosphate (non-oxidative stage): step 2/3. Functionally, transaldolase is important for the balance of metabolites in the pentose-phosphate pathway. The polypeptide is Probable transaldolase (Chelativorans sp. (strain BNC1)).